The sequence spans 262 residues: Phosphonates import ATP-binding protein PhnC (262 aa).

The 249-residue stretch at 5–253 (IRVEKLAKTF…RFDHLYRSIN (249 aa)) folds into the ABC transporter domain. 37-44 (GPSGSGKS) provides a ligand contact to ATP.

Belongs to the ABC transporter superfamily. Phosphonates importer (TC 3.A.1.9.1) family. The complex is composed of two ATP-binding proteins (PhnC), two transmembrane proteins (PhnE) and a solute-binding protein (PhnD).

It is found in the cell inner membrane. It catalyses the reaction phosphonate(out) + ATP + H2O = phosphonate(in) + ADP + phosphate + H(+). In terms of biological role, part of the ABC transporter complex PhnCDE involved in phosphonates import. Responsible for energy coupling to the transport system. The polypeptide is Phosphonates import ATP-binding protein PhnC (Shigella boydii serotype 4 (strain Sb227)).